The sequence spans 270 residues: uncharacterized protein (270 aa).

H171 (proton donor) is an active-site residue. Residue C261 is the Nucleophile of the active site.

It belongs to the DDAH family.

This is an uncharacterized protein from Aeropyrum pernix (strain ATCC 700893 / DSM 11879 / JCM 9820 / NBRC 100138 / K1).